The primary structure comprises 1408 residues: ABC transporter B family member 20 (1408 aa).

The disordered stretch occupies residues 14 to 49 (HMQPLTPVSEVSEPPESPSPYLDPGAESGGGTGTAA). The span at 20–39 (PVSEVSEPPESPSPYLDPGA) shows a compositional bias: low complexity. Residues 86–106 (VLMIVGSVAAAAHGTALIVYL) traverse the membrane as a helical segment. One can recognise an ABC transmembrane type-1 1 domain in the interval 88–381 (MIVGSVAAAA…AATNFYSFDQ (294 aa)). N120 carries N-linked (GlcNAc...) asparagine glycosylation. A run of 3 helical transmembrane segments spans residues 141–161 (IVYI…CWIL), 214–233 (VGNY…IGFV), and 238–260 (IALI…NIFL). The N-linked (GlcNAc...) asparagine glycan is linked to N293. A run of 2 helical transmembrane segments spans residues 312–332 (GILI…LAIC) and 353–373 (GEII…NQAA). The 236-residue stretch at 414 to 649 (IEFRNVYFSY…GGLYAELLKC (236 aa)) folds into the ABC transporter 1 domain. ATP is bound at residue 449–456 (GRNGSGKS). N451 carries an N-linked (GlcNAc...) asparagine glycan. Disordered regions lie at residues 676-735 (SSAG…SLDC) and 752-816 (LPHL…DAQH). Polar residues predominate over residues 762-771 (CPQQKSNGSE). An N-linked (GlcNAc...) asparagine glycan is attached at N768. The span at 802–816 (DDTKANGKASKDAQH) shows a compositional bias: basic and acidic residues. Residues 836–1124 (AVLGSLGAAI…PFGLAPYILK (289 aa)) form the ABC transmembrane type-1 2 domain. 6 consecutive transmembrane segments (helical) span residues 841-861 (LGAA…ALVV), 881-901 (LIIA…HFYF), 959-979 (IFIQ…LLGW), 983-1003 (LVAL…KLWL), 1062-1082 (IGFA…LLLW), and 1103-1123 (MVFS…PYIL). The ABC transporter 2 domain occupies 1159 to 1396 (IELKNVDFCY…NGLYVRLMQP (238 aa)). A glycan (N-linked (GlcNAc...) asparagine) is linked at N1179. 1194 to 1201 (GVSGSGKS) serves as a coordination point for ATP. N1261 and N1347 each carry an N-linked (GlcNAc...) asparagine glycan.

This sequence belongs to the ABC transporter superfamily. ABCB family. Multidrug resistance exporter (TC 3.A.1.201) subfamily. Expressed in aerial tissues.

It is found in the membrane. The catalysed reaction is (indol-3-yl)acetate(in) + ATP + H2O = (indol-3-yl)acetate(out) + ADP + phosphate + H(+). Functionally, probable auxin efflux transporter that contributes, together with ABCB6 and in a FKBP42/TWD1-dependent manner, to the regulation of leaf position and morphology, internode distribution, roots development, and inflorescence organization, probably by modulating auxin repartition. The polypeptide is ABC transporter B family member 20 (Arabidopsis thaliana (Mouse-ear cress)).